An 877-amino-acid polypeptide reads, in one-letter code: MNEKYAALKSNVRMLGHLLGNTIRDAHGEEIFEKVETIRKLSKSAQAGNQADRESLIEEIKHLPDEQLTPVTRAFNQFLNLTNIAEQYHTISRHCEEHICEPDAINSLFSKLVQNDVSKLDTAQAVRDLNIELVLTAHPTEITRRTMINKLVKINECLSKLELSDLSSKERKKTERRLEQLIAQSWHSDVIRQQRPTPLDEAKWGFAVVENSLWEAVPDFLREMNDRLKSYLGEGLPIDARPVHFSSWMGGDRDGNPFVTHSVTREVLLLSRWKAADLYLNDINELISELSMTVSNDQVRELAGEDQHEPYRAILKQLRALLNETKDILDAKIHGQKLAVKAPLQKVEQLWDPLYACYQSLHECGMGVIADGSLLDTLRRVKAFGVHLVRLDIRQESTRHADVLSELTRYLGIGDYEQWSEQDKIAFLTNELASKRPLLPRDWEPSEPVKEVLDTCKIIALQPREAFGAYVISMARTASDVLAVHLLLQEAGCPYRMDVCPLFETLDDLNNAESVIKQLMSIDLYRGFIQNHQMVMIGYSDSAKDAGVMSAGWAQYHAMESLVKVAEDEGVELTLFHGRGGTVGRGGAPAHAALLSQPPKSLKGGLRVTEQGEMIRFKLGLPDVAVNSFNLYASAILEANLLPPPEPKQEWRDLMEVLSEVSCEAYRGVVRGEPDFVPYFRQATPELELGKLPLGSRPAKRNPNGGVESLRAIPWIFSWSQNRLVLPAWLGAGEAIQYSVDKGHQALLEEMCREWPFFSTRLGMLEMVYTKCNMEISRYYDQRLVEPQLQPLGDRLREQLQRDIKSVLNVENNENLMQSDPWGQESIRLRNIYVEPLNMLQAELLYRTRQTEEASANLEEALMVTIAGIAAGMRNTG.

Catalysis depends on residues His138 and Lys544.

It belongs to the PEPCase type 1 family. Mg(2+) is required as a cofactor.

The catalysed reaction is oxaloacetate + phosphate = phosphoenolpyruvate + hydrogencarbonate. Forms oxaloacetate, a four-carbon dicarboxylic acid source for the tricarboxylic acid cycle. This is Phosphoenolpyruvate carboxylase from Vibrio parahaemolyticus serotype O3:K6 (strain RIMD 2210633).